Here is a 486-residue protein sequence, read N- to C-terminus: UDP-N-acetylmuramate--L-alanine ligase (486 aa).

126–132 (GTHGKTS) provides a ligand contact to ATP.

The protein belongs to the MurCDEF family.

The protein localises to the cytoplasm. The enzyme catalyses UDP-N-acetyl-alpha-D-muramate + L-alanine + ATP = UDP-N-acetyl-alpha-D-muramoyl-L-alanine + ADP + phosphate + H(+). It functions in the pathway cell wall biogenesis; peptidoglycan biosynthesis. Its function is as follows. Cell wall formation. In Corynebacterium glutamicum (strain ATCC 13032 / DSM 20300 / JCM 1318 / BCRC 11384 / CCUG 27702 / LMG 3730 / NBRC 12168 / NCIMB 10025 / NRRL B-2784 / 534), this protein is UDP-N-acetylmuramate--L-alanine ligase.